Here is a 302-residue protein sequence, read N- to C-terminus: UDP-N-acetylenolpyruvoylglucosamine reductase (302 aa).

The region spanning 27 to 192 (KTGGPADYVA…VSVTFGLKPG (166 aa)) is the FAD-binding PCMH-type domain. Arginine 171 is an active-site residue. Serine 221 (proton donor) is an active-site residue. Residue glutamate 291 is part of the active site.

Belongs to the MurB family. The cofactor is FAD.

The protein localises to the cytoplasm. It catalyses the reaction UDP-N-acetyl-alpha-D-muramate + NADP(+) = UDP-N-acetyl-3-O-(1-carboxyvinyl)-alpha-D-glucosamine + NADPH + H(+). The protein operates within cell wall biogenesis; peptidoglycan biosynthesis. Its function is as follows. Cell wall formation. The sequence is that of UDP-N-acetylenolpyruvoylglucosamine reductase from Lactiplantibacillus plantarum (strain ATCC BAA-793 / NCIMB 8826 / WCFS1) (Lactobacillus plantarum).